The primary structure comprises 91 residues: Sec-independent protein translocase protein TatA (91 aa).

The helical transmembrane segment at 1–21 (MGIFDWKHWIVILIVVVLVFG) threads the bilayer. The tract at residues 41-91 (KAMNDDDKPAEQPAPQPQQAQPAPQGSPLNQPHTIDAQAHKVDEPIRKDQV) is disordered. Positions 51–64 (EQPAPQPQQAQPAP) are enriched in low complexity. The segment covering 78 to 91 (QAHKVDEPIRKDQV) has biased composition (basic and acidic residues).

The protein belongs to the TatA/E family. As to quaternary structure, the Tat system comprises two distinct complexes: a TatABC complex, containing multiple copies of TatA, TatB and TatC subunits, and a separate TatA complex, containing only TatA subunits. Substrates initially bind to the TatABC complex, which probably triggers association of the separate TatA complex to form the active translocon.

The protein localises to the cell inner membrane. Its function is as follows. Part of the twin-arginine translocation (Tat) system that transports large folded proteins containing a characteristic twin-arginine motif in their signal peptide across membranes. TatA could form the protein-conducting channel of the Tat system. This chain is Sec-independent protein translocase protein TatA, found in Pseudomonas syringae pv. syringae (strain B728a).